Consider the following 274-residue polypeptide: MDALIGDFADFHKECSARTALHLVNGKFGKVSVWKHGPTQKSFFYKRIEHKHFNAIEPFVHHLMKFNKYFLRLFYSLHSLREHLLVMDYIPDGDLFDLMQTEPRLREPEISLIAYQLIDALQALHKHNVVHNDVKLENVLYRRFEQIYVCDYGLCKIAGSPSTFEGTVDYFSPEKINKHAAAVHFDWWAVGVLLYEISTGKHPFKLDQDESLDVETLHKRQIQLDVTFPADFDNPFLEEFICFLLGYCYDYRAHSYEVIQKNTYWKSIVHWKQR.

The 249-residue stretch at 17 to 265 folds into the Protein kinase domain; the sequence is ARTALHLVNG…YEVIQKNTYW (249 aa). ATP-binding positions include 23–31 and K46; that span reads LVNGKFGKV. D133 functions as the Proton acceptor in the catalytic mechanism.

The protein belongs to the protein kinase superfamily. Ser/Thr protein kinase family.

It catalyses the reaction L-seryl-[protein] + ATP = O-phospho-L-seryl-[protein] + ADP + H(+). The enzyme catalyses L-threonyl-[protein] + ATP = O-phospho-L-threonyl-[protein] + ADP + H(+). In vitro, can phosphorylate histone H1. This chain is Serine/threonine-protein kinase 1 (PK1), found in Lymantria dispar multicapsid nuclear polyhedrosis virus (LdMNPV).